A 452-amino-acid chain; its full sequence is Ribosomal protein uS12 methylthiotransferase RimO (452 aa).

The MTTase N-terminal domain maps to 5 to 116 (PTIAFSHLGC…IVDVLQRTES (112 aa)). Residues cysteine 14, cysteine 50, cysteine 79, cysteine 154, cysteine 158, and cysteine 161 each coordinate [4Fe-4S] cluster. A Radical SAM core domain is found at 140–369 (TTTSAVAYLR…MATQQPIAER (230 aa)). The region spanning 372 to 438 (RAQIGRLVDV…IYDLHGEVAS (67 aa)) is the TRAM domain.

Belongs to the methylthiotransferase family. RimO subfamily. [4Fe-4S] cluster is required as a cofactor.

It localises to the cytoplasm. It carries out the reaction L-aspartate(89)-[ribosomal protein uS12]-hydrogen + (sulfur carrier)-SH + AH2 + 2 S-adenosyl-L-methionine = 3-methylsulfanyl-L-aspartate(89)-[ribosomal protein uS12]-hydrogen + (sulfur carrier)-H + 5'-deoxyadenosine + L-methionine + A + S-adenosyl-L-homocysteine + 2 H(+). Catalyzes the methylthiolation of an aspartic acid residue of ribosomal protein uS12. The chain is Ribosomal protein uS12 methylthiotransferase RimO from Synechococcus sp. (strain ATCC 27144 / PCC 6301 / SAUG 1402/1) (Anacystis nidulans).